The primary structure comprises 310 residues: Transcription factor UNE12 (310 aa).

Disordered stretches follow at residues 124 to 156 and 229 to 253; these read HGQP…ATDP and SSSV…WSND. The bHLH domain occupies 152 to 201; sequence QATDPHSIAERLRRERIAERIRALQELVPTVNKTDRAAMIDEIVDYVKFL.

As to quaternary structure, homodimer. Expressed constitutively in roots, leaves, stems, and flowers.

The protein resides in the nucleus. Its function is as follows. Required for ovule fertilization. This is Transcription factor UNE12 (UNE12) from Arabidopsis thaliana (Mouse-ear cress).